A 329-amino-acid chain; its full sequence is Diaminopimelate epimerase (329 aa).

Residues asparagine 14 and asparagine 73 each contribute to the substrate site. The active-site Proton donor is cysteine 82. Substrate-binding positions include 83-84 (GN), asparagine 170, asparagine 206, and 224-225 (ER). Cysteine 233 (proton acceptor) is an active-site residue. 234–235 (GT) contacts substrate.

Belongs to the diaminopimelate epimerase family. Homodimer.

The protein resides in the cytoplasm. It carries out the reaction (2S,6S)-2,6-diaminopimelate = meso-2,6-diaminopimelate. Its pathway is amino-acid biosynthesis; L-lysine biosynthesis via DAP pathway; DL-2,6-diaminopimelate from LL-2,6-diaminopimelate: step 1/1. Functionally, catalyzes the stereoinversion of LL-2,6-diaminopimelate (L,L-DAP) to meso-diaminopimelate (meso-DAP), a precursor of L-lysine and an essential component of the bacterial peptidoglycan. The sequence is that of Diaminopimelate epimerase from Listeria monocytogenes serovar 1/2a (strain ATCC BAA-679 / EGD-e).